Reading from the N-terminus, the 107-residue chain is Glutaredoxin 4 (107 aa).

The 103-residue stretch at Ile4–Ser106 folds into the Glutaredoxin domain. Lys21 is a glutathione binding site. Residue Cys29 coordinates [2Fe-2S] cluster. Glutathione contacts are provided by residues Arg58, Phe70, and Cys83–Ser84.

The protein belongs to the glutaredoxin family. Monothiol subfamily. As to quaternary structure, homodimer.

It is found in the cytoplasm. Its function is as follows. Monothiol glutaredoxin involved in the biogenesis of iron-sulfur clusters. This Buchnera aphidicola subsp. Schizaphis graminum (strain Sg) protein is Glutaredoxin 4 (grxD).